Reading from the N-terminus, the 444-residue chain is Glutamyl-tRNA reductase (444 aa).

Substrate-binding positions include 49–52, serine 109, 114–116, and glutamine 120; these read TCNR and ETQ. The Nucleophile role is filled by cysteine 50. 189 to 194 serves as a coordination point for NADP(+); the sequence is GAGKMG.

It belongs to the glutamyl-tRNA reductase family. Homodimer.

The catalysed reaction is (S)-4-amino-5-oxopentanoate + tRNA(Glu) + NADP(+) = L-glutamyl-tRNA(Glu) + NADPH + H(+). Its pathway is porphyrin-containing compound metabolism; protoporphyrin-IX biosynthesis; 5-aminolevulinate from L-glutamyl-tRNA(Glu): step 1/2. Functionally, catalyzes the NADPH-dependent reduction of glutamyl-tRNA(Glu) to glutamate 1-semialdehyde (GSA). This chain is Glutamyl-tRNA reductase, found in Bacillus cereus (strain ATCC 10987 / NRS 248).